We begin with the raw amino-acid sequence, 443 residues long: KH domain-containing, RNA-binding, signal transduction-associated protein 1 (443 aa).

Positions 1 to 94 (MQRRDDPASR…PLLPPSATAA (94 aa)) are disordered. Phosphoserine occurs at positions 18 and 20. K21 is modified (N6-acetyllysine). S29 carries the post-translational modification Phosphoserine. T33 carries the phosphothreonine modification. Asymmetric dimethylarginine; by PRMT1 is present on residues R45 and R52. At S58 the chain carries Phosphoserine; by MAPK1. Residues 61-72 (TQPPPLLPPSTP) are compositionally biased toward pro residues. A phosphothreonine; by MAPK1 mark is found at T71 and T84. Positions 81–94 (SAPTPLLPPSATAA) are enriched in low complexity. Glycyl lysine isopeptide (Lys-Gly) (interchain with G-Cter in SUMO2) cross-links involve residues K96 and K102. The tract at residues 100–260 (ENKYLPELMA…VKKFLVPDMM (161 aa)) is involved in homodimerization. A Phosphoserine modification is found at S113. Residue K139 forms a Glycyl lysine isopeptide (Lys-Gly) (interchain with G-Cter in SUMO2) linkage. Position 150 is a phosphoserine (S150). The 27-residue stretch at 171–197 (NFVGKILGPQGNTIKRLQEETGAKISV) folds into the KH domain. N6-acetyllysine; alternate is present on K175. Residue K175 forms a Glycyl lysine isopeptide (Lys-Gly) (interchain with G-Cter in SUMO2); alternate linkage. T183 carries the phosphothreonine modification. Residues 280-317 (PSRGRGVSVRGRGAAPPPPPVPRGRGVGPPRGALVRGT) form a disordered region. R282, R284, and R291 each carry omega-N-methylarginine. Positions 283–293 (GRGVSVRGRGA) are enriched in low complexity. Residue R304 is modified to Asymmetric dimethylarginine. The segment covering 307-316 (GPPRGALVRG) has biased composition (low complexity). Omega-N-methylarginine; by PRMT1 is present on residues R310 and R315. Dimethylated arginine; alternate is present on R320. An Omega-N-methylarginine; by PRMT1; alternate modification is found at R320. At R325 the chain carries Omega-N-methylarginine; by PRMT1. A disordered region spans residues 326–345 (GATVTRGVPPPPTVRGAPTP). Dimethylated arginine; alternate is present on residues R331 and R340. Residues R331 and R340 each carry the omega-N-methylarginine; by PRMT1; alternate modification. An Asymmetric dimethylarginine; alternate modification is found at R331. The tract at residues 351-443 (GIQRIPLPPT…AYREHPYGRY (93 aa)) is interaction with HNRNPA1. A Phosphotyrosine modification is found at Y387. A Phosphoserine modification is found at S390. The segment at 400-420 (GHGELQDSYEAYGQDDWNGTR) is interaction with ZBTB7A. Residues 411 to 443 (YGQDDWNGTRPSLKAPPARPVKGAYREHPYGRY) are disordered. A Glycyl lysine isopeptide (Lys-Gly) (interchain with G-Cter in SUMO2) cross-link involves residue K432. Basic and acidic residues predominate over residues 434-443 (AYREHPYGRY). Y435, Y440, and Y443 each carry phosphotyrosine; by PTK6.

This sequence belongs to the KHDRBS family. In terms of assembly, self-associates to form homooligomers when bound to RNA, oligomerization appears to be limited when binding to proteins. Forms a trimeric complex in the nucleus consisting of BANP, HDAC6 and KHDRBS1/SAM68; HDAC6 keeps KHDRBS1 in a deacetylated state which inhibits the inclusion of CD44 alternate exons. The complex is disrupted by MAPK1/MAPK3-mediated phosphorylation of BANP which results in BANP export to the cytoplasm. This facilitates acetylation of KHDRBS1 and CD44 variant exon inclusion. Interacts with KHDRBS3/SLIM-2 and KHDRBS2/SLIM-1; heterooligomer formation of KHDRBS family proteins may modulate RNA substrate specificity. Interacts with RASA1, FYN, GRB2, PLCG1, SRC, CBP and PRMT1. Interacts with PTK6 (via SH3 and SH2 domains). Forms a complex with ILF2, ILF3, YLPM1, RBMX, NCOA5 and PPP1CA. Binds WBP4/FBP21 (via WW domains), FNBP4/FBP30 (via WW domains). Interacts (via Arg/Gly-rich-flanked Pro-rich regions) with FYN (via the SH3 domain). Interacts with APC, HNRNPA1. Interacts with the non-receptor tyrosine kinase SRMS; the interaction leads to phosphorylation of KHDRBS1. Interacts with ZBTB7A; negatively regulates KHDRBS1 splicing activity toward BCL2L1. Post-translationally, tyrosine phosphorylated by several non-receptor tyrosine kinases including LCK, FYN and JAK3. Also tyrosine phosphorylated by the non-receptor tyrosine kinase SRMS in an EGF-dependent manner. Phosphorylation by PTK6 negatively regulates its RNA binding ability. Phosphorylation by PTK6 at Tyr-440 dictates the nuclear localization of KHDRBS1. Phosphorylation by MAPK1 at Ser-58, Thr-71 and Thr-84 regulates CD44 alternative splicing by promoting CD44 exon v5 inclusion. In terms of processing, acetylated. Positively correlates with ability to bind RNA. Deacetylated by HDAC6; this regulates alternative splicing by inhibiting the inclusion of CD44 alternate exons. Arginine methylation is required for nuclear localization. Inhibits interaction with Src-like SH3 domains, but not interaction with WW domains of WBP4/FBP21 and FNBP4/FBP30. As to expression, in adult cerebellum expressed in most neuronal cell populations, specifically in cerebellar granule cells of the internal granular layer, ROR(alpha)-positive Purkinje cells, internal granular layer and molecular layer interneurons (at protein level).

It localises to the nucleus. The protein localises to the cytoplasm. The protein resides in the membrane. Functionally, recruited and tyrosine phosphorylated by several receptor systems, for example the T-cell, leptin and insulin receptors. Once phosphorylated, functions as an adapter protein in signal transduction cascades by binding to SH2 and SH3 domain-containing proteins. Role in G2-M progression in the cell cycle. Represses CBP-dependent transcriptional activation apparently by competing with other nuclear factors for binding to CBP. Also acts as a putative regulator of mRNA stability and/or translation rates and mediates mRNA nuclear export. Positively regulates the association of constitutive transport element (CTE)-containing mRNA with large polyribosomes and translation initiation. May not be involved in the nucleocytoplasmic export of unspliced (CTE)-containing RNA species. RNA-binding protein that plays a role in the regulation of alternative splicing and influences mRNA splice site selection and exon inclusion. Binds to RNA containing 5'-[AU]UAA-3' as a bipartite motif spaced by more than 15 nucleotides. Binds poly(A). In cooperation with HNRNPA1 modulates alternative splicing of BCL2L1 by promoting splicing toward isoform Bcl-X(S), and of SMN1. Can regulate CD44 alternative splicing in a Ras pathway-dependent manner. Can regulate alternative splicing of NRXN1 and NRXN3 in the laminin G-like domain 6 containing the evolutionary conserved neurexin alternative spliced segment 4 (AS4) involved in neurexin selective targeting to postsynaptic partners. In a neuronal activity-dependent manner cooperates synergistically with KHDRBS2/SLIM-1 in regulation of NRXN1 exon skipping at AS4. The cooperation with KHDRBS2/SLIM-1 is antagonistic for regulation of NXRN3 alternative splicing at AS4. This is KH domain-containing, RNA-binding, signal transduction-associated protein 1 from Mus musculus (Mouse).